The chain runs to 619 residues: Auxin efflux carrier component 7 (619 aa).

The Extracellular portion of the chain corresponds to 1 to 7 (MITWHDL). The chain crosses the membrane as a helical span at residues 8–28 (YTVLTAVIPLYVAMILAYGSV). Residues 29–38 (RWWKIFSPDQ) lie on the Cytoplasmic side of the membrane. The chain crosses the membrane as a helical span at residues 39–59 (CSGINRFVAIFAVPLLSFHFI). V51 lines the (indol-3-yl)acetate pocket. Residues 60 to 71 (SSNNPYAMNLRF) lie on the Extracellular side of the membrane. The chain crosses the membrane as a helical span at residues 72–92 (IAADTLQKLIMLTLLIIWANF). Over 93-101 (TRSGSLEWS) the chain is Cytoplasmic. A helical membrane pass occupies residues 102–122 (ITIFSLSTLPNTLVMGIPLLI). Positions 112 and 114 each coordinate (indol-3-yl)acetate. Residues 123–131 (AMYGEYSGS) are Extracellular-facing. A helical transmembrane segment spans residues 132–152 (LMVQIVVLQCIIWYTLLLFLF). Y145 provides a ligand contact to (indol-3-yl)acetate. At 153–479 (EYRGAKILIM…LIRNPNTYSS (327 aa)) the chain is on the cytoplasmic side. Phosphoserine is present on residues S229, S246, and S286. The disordered stretch occupies residues 306 to 340 (GAPGSYPAPNPEFSTGNKTGSKAPKENHHHVGKSN). A Phosphothreonine modification is found at T320. Residue S357 is modified to Phosphoserine. The disordered stretch occupies residues 393–413 (HTQNGENKAGPMNGDYGGEEE). The chain crosses the membrane as a helical span at residues 480–500 (LIGLIWALVAFRWDVAMPKII). Topologically, residues 501 to 503 (QQS) are extracellular. Residues 504–524 (ISILSDAGLGMAMFSLGLFMA) form a helical membrane-spanning segment. The Cytoplasmic segment spans residues 525-538 (LQPKLIACGNSTAT). Residues 539–559 (FAMAVRFFTGPAVMAVAAMAI) form a helical membrane-spanning segment. Residues 560–564 (GLRGD) are Extracellular-facing. The helical transmembrane segment at 565-585 (LLRVAIVQAALPQGIVPFVFA) threads the bilayer. 2 residues coordinate (indol-3-yl)acetate: I579 and V580. The Cytoplasmic segment spans residues 586-598 (KEYNVHPAILSTG). A helical membrane pass occupies residues 599 to 619 (VIFGMLIALPITLVYYILLGL).

It belongs to the auxin efflux carrier (TC 2.A.69.1) family. In terms of assembly, homodimer.

The protein localises to the cell membrane. Functionally, acts as a component of the auxin efflux carrier. Mediates the initial auxin gradient which contributes to the establishment of the apical-basal axis in early embryogenesis. Together with PIN3 and PIN4, involved in the connective auxin transport (CAT) that ensures communication across the shoot system, and modulates strigolactone-mediated shoot branching control. The abcb19 pin3 pin4 pin7 quadruple mutant exhibits an additive phenotype on strigolactone-mediated bud outgrowth responses and shoot branching control. In Arabidopsis thaliana (Mouse-ear cress), this protein is Auxin efflux carrier component 7.